We begin with the raw amino-acid sequence, 596 residues long: Elongation factor 4 (596 aa).

One can recognise a tr-type G domain in the interval Lys-2 to Glu-184. GTP contacts are provided by residues Asp-14–Thr-19 and Asn-131–Asp-134.

This sequence belongs to the TRAFAC class translation factor GTPase superfamily. Classic translation factor GTPase family. LepA subfamily.

Its subcellular location is the cell inner membrane. The enzyme catalyses GTP + H2O = GDP + phosphate + H(+). In terms of biological role, required for accurate and efficient protein synthesis under certain stress conditions. May act as a fidelity factor of the translation reaction, by catalyzing a one-codon backward translocation of tRNAs on improperly translocated ribosomes. Back-translocation proceeds from a post-translocation (POST) complex to a pre-translocation (PRE) complex, thus giving elongation factor G a second chance to translocate the tRNAs correctly. Binds to ribosomes in a GTP-dependent manner. The protein is Elongation factor 4 of Shewanella sp. (strain MR-7).